The chain runs to 146 residues: MIERDGAPTFEDVQELLNRSELTDVALYEHAGRRVDDAVDDEFSLQVLTRVGDTEFEIRCKVTAAGHGGQYLADAGAVFTLQSAAKIEEGTAREFAEKVGVMAVYPYLRAAVSQSAASLGLDRPILPLLRAGGVKLTESMDSAEDA.

Belongs to the SecB-like family.

Its function is as follows. Chaperone component of an orphan antitoxin chaperone (AC) system; there is no toxin gene in close genomic proximity. When expressed in E.coli complements the cold-sensitive phenotype of a secB deletion, suggesting it may have a generic chaperone function. Does not however complement the toxin-neutralizing effect of its M.tuberculosis paralog Rv1957 (AC P95257) in E.coli, probably because the antitoxin genes are not from the same family. This Mycolicibacterium smegmatis (strain ATCC 700084 / mc(2)155) (Mycobacterium smegmatis) protein is SecB-like chaperone SmegB.